The sequence spans 2140 residues: Dedicator of cytokinesis protein 7 (2140 aa).

Phosphoserine is present on residues serine 30, serine 180, and serine 182. The segment at 138–183 (FNPNTLDKQKERQKGLPKQVFESDEAPDGNSYQDDQDDLKRRSMSI) is disordered. Residues 365 to 395 (FKEADATKNKEKLEKLKSQADQFCQRLGKYR) adopt a coiled-coil conformation. Lysine 381 carries the post-translational modification N6-methyllysine. A Phosphothreonine modification is found at threonine 450. Serine 452 bears the Phosphoserine mark. In terms of domain architecture, C2 DOCK-type spans 561-727 (RNLLYIYPQS…GVFNVEVVAV (167 aa)). A phosphoserine mark is found at serine 862, serine 864, serine 882, serine 888, serine 896, serine 900, and serine 905. The span at 888–901 (SLNLNRSRSLSNSN) shows a compositional bias: low complexity. A disordered region spans residues 888-971 (SLNLNRSRSL…MSSHTETSSF (84 aa)). Threonine 907 and threonine 909 each carry phosphothreonine. Phosphoserine occurs at positions 910, 929, 964, 1383, 1390, 1394, 1398, 1421, 1425, 1429, 1430, 1432, 1434, and 1438. Positions 943–971 (SNPSPSAESTQAMDRSCNRMSSHTETSSF) are enriched in polar residues. A DOCKER domain is found at 1678–2114 (KGYQTSPDLR…LQPLINRKIP (437 aa)). Residue lysine 1962 is modified to N6-acetyllysine. Residues 2086-2112 (DQKEYQRELERNYHRLKEALQPLINRK) are a coiled coil. Serine 2129 carries the phosphoserine modification.

It belongs to the DOCK family. In terms of assembly, component of the DOCK7-induced septin displacement/DISP complex, at least composed of DOCK7, LRCH3 and MYO6. Interacts with TSC1. Interacts with nucleotide-free RAC1 and RAC3. Interacts with TACC3 and CRY1. Interacts with NOD2. In terms of tissue distribution, widely expressed.

The protein localises to the cell projection. It is found in the axon. Its function is as follows. Functions as a guanine nucleotide exchange factor (GEF), which activates Rac1 and Rac3 Rho small GTPases by exchanging bound GDP for free GTP. Does not have a GEF activity for CDC42. Required for STMN1 'Ser-15' phosphorylation during axon formation and consequently for neuronal polarization. As part of the DISP complex, may regulate the association of septins with actin and thereby regulate the actin cytoskeleton. Has a role in pigmentation. Involved in the regulation of cortical neurogenesis through the control of radial glial cells (RGCs) proliferation versus differentiation; negatively regulates the basal-to-apical interkinetic nuclear migration of RGCs by antagonizing the microtubule growth-promoting function of TACC3. This chain is Dedicator of cytokinesis protein 7 (DOCK7), found in Homo sapiens (Human).